We begin with the raw amino-acid sequence, 382 residues long: Homeobox protein SHOOT MERISTEMLESS (382 aa).

Residues 26-59 (MMMMMPPIMTSHQHHGHDHQHQQQEHDGYAYQSH) are disordered. Positions 44–53 (HQHQQQEHDG) are enriched in basic and acidic residues. The ELK domain maps to 262-282 (ELKGQLLRKYSGYLGSLKQEF). The homeobox; TALE-type DNA-binding region spans 283-346 (MKKRKKGKLP…NQRKRHWKPS (64 aa)).

It belongs to the TALE/KNOX homeobox family. As to quaternary structure, forms homodimers. May form heterodimeric complexes with TALE/BELL proteins BEL1, BLH2, BLH3, BLH8/PNF, BLH9/PNY and ATH1. Interacts with CCT8. Binds to MBP2C; this interaction reduces RNA binding capacity. Interacts with FTIP3 and FTIP4. Expressed in all four types of shoot apical meristems (SAM) i.e. in vegetative, axillary, inflorescence and floral.

The protein resides in the nucleus. It localises to the cell junction. The protein localises to the plasmodesma. Its subcellular location is the cytoplasm. It is found in the endosome. The protein resides in the cell membrane. Functionally, required for shoot apical meristem (SAM) formation during embryogenesis. Negatively regulates ASYMMETRIC LEAVES1 (AS1) and ASYMMETRIC LEAVES2 (AS2 or LBD6). Probably binds to the DNA sequence 5'-TGAC-3'. Binds to RNA. The chain is Homeobox protein SHOOT MERISTEMLESS from Arabidopsis thaliana (Mouse-ear cress).